Reading from the N-terminus, the 365-residue chain is Homeobox protein knotted-1-like 7 (365 aa).

Residues Met1–Gly11 show a composition bias toward basic and acidic residues. A disordered region spans residues Met1–Leu20. An ELK domain is found at Ala227–Leu247. The segment at residues Ser248 to Thr311 is a DNA-binding region (homeobox; TALE-type).

Belongs to the TALE/KNOX homeobox family.

The protein resides in the nucleus. In terms of biological role, probable transcription factor that may be involved in shoot formation during embryogenesis. The protein is Homeobox protein knotted-1-like 7 (OSH3) of Oryza sativa subsp. japonica (Rice).